A 188-amino-acid polypeptide reads, in one-letter code: MKVSASSLRKGNVVDLDGKLYVVLSAQNIHPGKGTPVTQLDMRRISDGVKVSERYRTTETVERATVDDRDYTFLYEDGEGFHFMNPESYEQVTASAEMIGDAKYYLTDGCTVKLSTHEGVPIAIELPRLATFEVVDTEPTVKGQTASSSYKPAVLSNGLRTMIPPYITVGTKIVVLTEDGSYQERAKD.

It belongs to the elongation factor P family.

It is found in the cytoplasm. It participates in protein biosynthesis; polypeptide chain elongation. In terms of biological role, involved in peptide bond synthesis. Stimulates efficient translation and peptide-bond synthesis on native or reconstituted 70S ribosomes in vitro. Probably functions indirectly by altering the affinity of the ribosome for aminoacyl-tRNA, thus increasing their reactivity as acceptors for peptidyl transferase. This chain is Elongation factor P, found in Phenylobacterium zucineum (strain HLK1).